The primary structure comprises 731 residues: Bifunctional trehalose-6-phosphate synthase/phosphatase (731 aa).

Residues 1 to 464 (MRLIVVSNRL…WGTDFIYSLI (464 aa)) are alpha,alpha-trehalose-phosphate synthase. R9 is a D-glucose 6-phosphate binding site. Position 25–26 (25–26 (GG)) interacts with UDP-alpha-D-glucose. D-glucose 6-phosphate-binding residues include Y89 and D143. Residues R276 and K281 each coordinate UDP-alpha-D-glucose. D-glucose 6-phosphate is bound at residue R314. 379–383 (LVAKE) contacts UDP-alpha-D-glucose. The interval 465–731 (SAKSAREEVE…RSLLEQLRPP (267 aa)) is trehalose-6-phosphate phosphatase. D503 functions as the Nucleophile in the catalytic mechanism. D503, D505, and D684 together coordinate Mg(2+). 503–505 (DYD) is an alpha,alpha-trehalose 6-phosphate binding site.

This sequence in the N-terminal section; belongs to the glycosyltransferase 20 family. The protein in the C-terminal section; belongs to the trehalose phosphatase family. In terms of assembly, may interact with the putative glycosyltransferase (GT) TTX_1305. TTX_1305 is required for the trehalose-6-phosphate synthase activity of tpsp. Requires Mg(2+) as cofactor.

The enzyme catalyses D-glucose 6-phosphate + UDP-alpha-D-glucose = alpha,alpha-trehalose 6-phosphate + UDP + H(+). It catalyses the reaction alpha,alpha-trehalose 6-phosphate + H2O = alpha,alpha-trehalose + phosphate. It functions in the pathway glycan biosynthesis; trehalose biosynthesis. Functionally, bifunctional enzyme which catalyzes the transfer of glucose from UDP-alpha-D-glucose to glucose-6-phosphate to form trehalose-6-phosphate (Tre6P) and removes the phosphate from Tre6P to produce free trehalose. In Thermoproteus tenax (strain ATCC 35583 / DSM 2078 / JCM 9277 / NBRC 100435 / Kra 1), this protein is Bifunctional trehalose-6-phosphate synthase/phosphatase.